A 433-amino-acid polypeptide reads, in one-letter code: GTPase Obg (433 aa).

The Obg domain maps to 1–159 (MKFVDSADLI…FEIRAELKVL (159 aa)). An OBG-type G domain is found at 160-332 (ADVGFVGLPN…LLFMIYEELK (173 aa)). GTP contacts are provided by residues 166 to 173 (GLPNAGKS), 191 to 195 (FTTIN), 213 to 216 (DLPG), 284 to 287 (NKMD), and 313 to 315 (SGL). The Mg(2+) site is built by serine 173 and threonine 193. The OCT domain maps to 355 to 433 (KFEEQKEDIQ…VFDYELEWTD (79 aa)).

The protein belongs to the TRAFAC class OBG-HflX-like GTPase superfamily. OBG GTPase family. As to quaternary structure, monomer. Mg(2+) serves as cofactor.

It localises to the cytoplasm. In terms of biological role, an essential GTPase which binds GTP, GDP and possibly (p)ppGpp with moderate affinity, with high nucleotide exchange rates and a fairly low GTP hydrolysis rate. Plays a role in control of the cell cycle, stress response, ribosome biogenesis and in those bacteria that undergo differentiation, in morphogenesis control. This Mycoplasma capricolum subsp. capricolum (strain California kid / ATCC 27343 / NCTC 10154) protein is GTPase Obg.